Reading from the N-terminus, the 292-residue chain is NAD kinase (292 aa).

Residue Asp73 is the Proton acceptor of the active site. Residues 73-74, 147-148, His158, Arg175, Asp177, 188-193, and Gln247 each bind NAD(+); these read DG, NE, and TAYSLS.

It belongs to the NAD kinase family. The cofactor is a divalent metal cation.

The protein resides in the cytoplasm. The enzyme catalyses NAD(+) + ATP = ADP + NADP(+) + H(+). Involved in the regulation of the intracellular balance of NAD and NADP, and is a key enzyme in the biosynthesis of NADP. Catalyzes specifically the phosphorylation on 2'-hydroxyl of the adenosine moiety of NAD to yield NADP. The chain is NAD kinase from Salmonella agona (strain SL483).